Consider the following 139-residue polypeptide: Ribonuclease P/MRP protein subunit POP5 (139 aa).

The protein belongs to the eukaryotic/archaeal RNase P protein component 2 family.

Its subcellular location is the nucleus. The catalysed reaction is Endonucleolytic cleavage of RNA, removing 5'-extranucleotides from tRNA precursor.. Its function is as follows. Component of ribonuclease P, a protein complex that generates mature tRNA molecules by cleaving their 5'-ends. Also a component of RNase MRP, which cleaves pre-rRNA sequences. The polypeptide is Ribonuclease P/MRP protein subunit POP5 (Schizosaccharomyces pombe (strain 972 / ATCC 24843) (Fission yeast)).